The sequence spans 549 residues: Glucose-6-phosphate isomerase 1 (549 aa).

The active-site Proton donor is the Glu358. Active-site residues include His389 and Lys513.

It belongs to the GPI family.

The protein resides in the cytoplasm. It carries out the reaction alpha-D-glucose 6-phosphate = beta-D-fructose 6-phosphate. It functions in the pathway carbohydrate biosynthesis; gluconeogenesis. Its pathway is carbohydrate degradation; glycolysis; D-glyceraldehyde 3-phosphate and glycerone phosphate from D-glucose: step 2/4. Functionally, catalyzes the reversible isomerization of glucose-6-phosphate to fructose-6-phosphate. This chain is Glucose-6-phosphate isomerase 1, found in Streptomyces avermitilis (strain ATCC 31267 / DSM 46492 / JCM 5070 / NBRC 14893 / NCIMB 12804 / NRRL 8165 / MA-4680).